Consider the following 304-residue polypeptide: Small glutamine-rich tetratricopeptide repeat-containing protein beta (304 aa).

TPR repeat units follow at residues 15–49 (LREQSQMDAYTSDEQESLEVAIQCLETVFKISPED), 85–118 (ADQLKDEGNNHMKEENYAAAVDCYTQAIELDPNN), 120–152 (VYYCNRAAAQSKLSHYTDAIKDCEKAIAIDSKY), and 153–186 (SKAYGRMGLALTAMNKFEEAVTSYQKALDLDPEN). The residue at position 131 (Lys-131) is an N6-acetyllysine. Phosphoserine is present on residues Ser-293, Ser-295, and Ser-297.

It belongs to the SGT family. Homooligomerize. Expressed specifically in brain.

In terms of biological role, co-chaperone that binds directly to HSC70 and HSP70 and regulates their ATPase activity. This is Small glutamine-rich tetratricopeptide repeat-containing protein beta (Sgtb) from Rattus norvegicus (Rat).